Consider the following 104-residue polypeptide: Circadian clock oscillator protein KaiB (104 aa).

Belongs to the KaiB family. As to quaternary structure, the KaiABC complex composition changes during the circadian cycle to control KaiC phosphorylation. Complexes KaiC(6), KaiA(2-4):KaiC(6), KaiB(6):KaiC(6) and KaiC(6):KaiB(6):KaiA(12) are among the most important forms, many form cooperatively. Undergoes a major conformational rearrangment; in the free state forms homotetramers as a dimer of dimers. When bound to the CI domain of KaiC switches to a monomeric thioredoxin-fold (KaiB(fs)). KaiB(fs) binds CikA, leading it to dephosphorylate phospho-RpaA.

Functionally, key component of the KaiABC oscillator complex, which constitutes the main circadian regulator in cyanobacteria. Complex composition changes during the circadian cycle to control KaiC phosphorylation. KaiA stimulates KaiC autophosphorylation, while KaiB sequesters KaiA, leading to KaiC autodephosphorylation. Phospho-Ser-431 KaiC accumulation triggers binding of KaiB to form the KaiB(6):KaiC(6) complex, leading to changes in output regulators CikA and SasA. KaiB switches to a thioredoxin-like fold (KaiB(fs)) when bound to KaiC. KaiB(6):KaiC(6) formation exposes a site for KaiA binding that sequesters KaiA from KaiC, making the KaiC(6):KaiB(6):KaiA(12) complex that results in KaiC autodephosphorylation. Its function is as follows. A metamorphic protein which reversibly switches between an inactive tetrameric fold and a rare, thioredoxin-like monomeric fold (KaiB(fs)). KaiB(fs) binds phospho-KaiC, KaiA and CikA. KaiA and CikA compete for binding to KaiB(fs), and KaiB(fs) and SasA compete for binding to KaiC, thus the clock oscillator and output signal pathway are tightly coupled. The polypeptide is Circadian clock oscillator protein KaiB (Parasynechococcus marenigrum (strain WH8102)).